A 215-amino-acid polypeptide reads, in one-letter code: Glutaredoxin 2 (215 aa).

Positions 1–77 constitute a GST N-terminal domain; it reads MKLYIYDHCP…YVDKLDGKPL (77 aa). Cys-9 and Cys-12 are disulfide-bonded.

It belongs to the glutaredoxin family.

Functionally, involved in reducing some disulfides in a coupled system with glutathione reductase. Does not act as hydrogen donor for ribonucleotide reductase. This Escherichia coli O157:H7 protein is Glutaredoxin 2 (grxB).